We begin with the raw amino-acid sequence, 609 residues long: MKENSEDCPLWINYDGLIILEMFRENSQQATNFLIAIAEPISRPENIHEYQITPYSLFAAASVGLTTDQITNTLQKFSKNIIPRNVKNLISDCTLSYGKLKLVRQSQKFFIEVYNDKIFNFITSDEILKSFIVNSNIDELKIEITNVEKIKKRCIEIDYPLIDEYDYTAYESVNMIKNLHIDLKPSCHIRSYQEISLNKMLGNGRARSGIIVLPCGSGKTLVGITAISTIKKSAIILCTSAVSVEQWKQSILLFTTINPYSVSRFTSDCKEWFENYNVENTSQGGILITTYSMLSFSGKRSYDVQRIINKIFAYNWGIMILDEVHVVPAQMFRKVVSSVLHQCKLGLTATLVREDDKIEDLNFLIGPKLYEANWQDLSDKGHIAKVECSEVWCEMTAEFYREYLIQDTSKKRLLSIMNPVKIQMCEYLIQKHEAQGDKIIVFSDSVFALKEYAIKMKKPFIYGPTSQTERMKILKQFQINSKINTLFLSKVGDTSIDLPEATCLIQISSHFGSRRQEAQRLGRVLRAKKRNNPNFKAYFYSLVSKDTEEMHYSAKRQQFLIDQGYSFKTIIGFNDMYYNETRLYKTKQEQKELLFNLLSKNLSSDETDK.

The Helicase ATP-binding domain maps to 200 to 369 (MLGNGRARSG…DLNFLIGPKL (170 aa)). 213 to 220 (LPCGSGKT) contacts ATP. The short motif at 322-325 (DEVH) is the DEAH box element. The 162-residue stretch at 423 to 584 (QMCEYLIQKH…DMYYNETRLY (162 aa)) folds into the Helicase C-terminal domain.

It belongs to the helicase family. RAD25/XPB subfamily. In terms of assembly, component of the 7-subunit TFIIH core complex composed of XPB/SSL2, XPD/RAD3, SSL1, TFB1, TFB2, TFB4 and TFB5, which is active in NER. The core complex associates with the 3-subunit CTD-kinase module TFIIK composed of CCL1, KIN28 and TFB3 to form the 10-subunit holoenzyme (holo-TFIIH) active in transcription.

The protein resides in the nucleus. The enzyme catalyses Couples ATP hydrolysis with the unwinding of duplex DNA by translocating in the 3'-5' direction.. It catalyses the reaction ATP + H2O = ADP + phosphate + H(+). Functionally, ATP-dependent 3'-5' DNA helicase/translocase; binds dsDNA rather than ssDNA, unzipping it in a translocase rather than classical helicase activity. Component of the general transcription and DNA repair factor IIH (TFIIH) core complex. When complexed to CDK-activating kinase (CAK), involved in RNA transcription by RNA polymerase II. Also involved in transcription-coupled nucleotide excision repair (NER) of damaged DNA. In NER, TFIIH acts by opening DNA around the lesion to allow the excision of the damaged oligonucleotide and its replacement by a new DNA fragment. The ATPase activity of XPB/SSL2, but not its helicase activity, is required for DNA opening. In transcription, TFIIH has an essential role in transcription initiation. When the pre-initiation complex (PIC) has been established, TFIIH is required for promoter opening and promoter escape. The ATP-dependent helicase activity of XPB/SSL2 is required for promoter opening and promoter escape. This Enterocytozoon bieneusi (strain H348) (Microsporidian parasite) protein is General transcription and DNA repair factor IIH helicase/translocase subunit XPB (SSL2).